The following is a 196-amino-acid chain: Calcium channel flower (196 aa).

The next 3 membrane-spanning stretches (helical) occupy residues 36 to 56 (LGIV…LSII), 67 to 89 (IIQM…ICIE), and 114 to 134 (AVPP…GLIF).

Belongs to the calcium channel flower family. In terms of assembly, homomultimer. Associates with the dally/ magu complex.

It localises to the cell membrane. It is found in the cytoplasmic vesicle. The protein resides in the secretory vesicle. Its subcellular location is the synaptic vesicle membrane. The protein localises to the presynaptic cell membrane. It localises to the endosome. Its activity is regulated as follows. Channel activity is inhibited by La(3+), which reduces Ca(2+) influx and thus inhibits it's function in promoting activity-dependent bulk endocytosis (ADBE) in response to high stimuli. In terms of biological role, transmembrane protein which mediates synaptic endocytosis, fitness-based cell culling, neuronal culling, morphogen gradient scaling, and calcium transport. Regulates synaptic endocytosis and hence couples exo- with endocytosis. Controls two major modes of synaptic vesicle (SV) endocytosis in the synaptic boutons of neuromuscular junctions (NMJs); Ca(2+) channel-independent Clathrin-mediated endocytosis (CME) in response to mild stimulation, and Ca(2+) channel-dependent activity-dependent bulk endocytosis (ADBE) in response to strong stimulation. Functions in ADBE and subsequent SV reformation from bulk endosomes by initiating Ca(2+) channel-dependent phosphatidylinositol 4,5-bisphosphate (PtdIns(4,5)P2) compartmentalization in synaptic boutons. There it acts at the periactive zone to provide the low Ca(2+) levels required to initiate Calcineurin activation and upregulate PtdIns(4,5)P2. Conversely PtdIns(4,5)P2 enhances fwe Ca(2+) channel-activity, establishing a positive feedback loop that induces PtdIns(4,5)P2 microdomain at the periactive zone. These microdomains trigger bulk membrane invagination (i.e. ADBE) by triggering actin polymerization while also promoting localization of fwe to bulk endosomes, thereby removing the ADBE trigger to reduce endocytosis and prevent excess membrane uptake. PtdIns(4,5)P2 then promotes SV reformation from the bulk endosomes, to coordinate ADBE and subsequent SV reformation. Different combinations of the flower isoforms at the cell membrane are also required for the identification and elimination of suboptimal or supernumerary cells during development, regeneration, and adulthood. Required for the recognition and elimination of unfit cells in the developing wing during cell competition. In the developing pupal retina, mediates the elimination of unwanted postmitotic neurons, including supernumerary photoreceptor neurons that form at the periphery of the retina and are contained within incomplete ommatidia units. Also required for efficient elimination and replacement of old neurons by newly generated neurons during regeneration in the adult brain following mechanical injury. Downstream of the flower fitness fingerprints, cells identified as unwanted or unfit are eliminated via apoptosis through the expression of ahuizotl (azot). However, the cells marked for elimination by the flower isoforms only undergo apoptosis if additional thresholds are met; (1) their neighboring fit/healthy cells express different levels of the fwe isoforms, and (2) the levels of the protective signal SPARC expressed by the loser or unwanted cells are unable to inhibit caspase activation. These additional thresholds for flower-mediated apoptosis, allows useful cells to recover from transient and limited stress before they are unnecessarily eliminated. Functions with dally and magu in a mechanism of scaling, which utilises apoptosis to ensure that the dpp morphogen gradient, which mediates organ growth, remains proportional to the size of the growing wing. In this mechanism, fwe represses dally- and Magu-dependent activity in expanding the gradient, and dally/Magu inhibits fwe-dependent apoptosis to keep cell death rate low. When the levels of these different proteins are optimally regulated the gradient correctly scales with organ growth but when this fails, fwe-mediated apoptosis is activated to trim the developing tissue to match the correct size of the gradient. The sequence is that of Calcium channel flower from Drosophila virilis (Fruit fly).